The primary structure comprises 125 residues: Apolipoprotein C-IV (125 aa).

An N-terminal signal peptide occupies residues 1 to 27; the sequence is MSLLRQRLQALPVLCLCVLVLACIGAC.

It belongs to the apolipoprotein C4 family.

Its subcellular location is the secreted. Its function is as follows. May participate in lipoprotein metabolism. In Plecturocebus moloch (Dusky titi monkey), this protein is Apolipoprotein C-IV (APOC4).